The chain runs to 109 residues: Spermidine export protein MdtI (109 aa).

Transmembrane regions (helical) follow at residues 6–26 (WIHA…NVFL), 36–56 (IYGI…SQAV), 64–84 (AYAL…WVLF), and 88–108 (LNNK…LIKL).

The protein belongs to the drug/metabolite transporter (DMT) superfamily. Small multidrug resistance (SMR) (TC 2.A.7.1) family. MdtI subfamily. In terms of assembly, forms a complex with MdtJ.

It localises to the cell inner membrane. Functionally, catalyzes the excretion of spermidine. This chain is Spermidine export protein MdtI, found in Klebsiella pneumoniae subsp. pneumoniae (strain ATCC 700721 / MGH 78578).